A 367-amino-acid polypeptide reads, in one-letter code: 4-hydroxy-3-methylbut-2-en-1-yl diphosphate synthase (flavodoxin) (367 aa).

4 residues coordinate [4Fe-4S] cluster: Cys265, Cys268, Cys300, and Glu307.

This sequence belongs to the IspG family. It depends on [4Fe-4S] cluster as a cofactor.

It carries out the reaction (2E)-4-hydroxy-3-methylbut-2-enyl diphosphate + oxidized [flavodoxin] + H2O + 2 H(+) = 2-C-methyl-D-erythritol 2,4-cyclic diphosphate + reduced [flavodoxin]. It participates in isoprenoid biosynthesis; isopentenyl diphosphate biosynthesis via DXP pathway; isopentenyl diphosphate from 1-deoxy-D-xylulose 5-phosphate: step 5/6. Converts 2C-methyl-D-erythritol 2,4-cyclodiphosphate (ME-2,4cPP) into 1-hydroxy-2-methyl-2-(E)-butenyl 4-diphosphate. This Bacillus anthracis protein is 4-hydroxy-3-methylbut-2-en-1-yl diphosphate synthase (flavodoxin).